The chain runs to 128 residues: MYKSWTLGDPKEKEGVGNILEETKRTQNNTEQASRAINSPLQSPYTDSMKALAISSHWFLPQIHTLPPITKATRHRWPPACCGRRGGQTTLPPLTPIVRACESMERSCPGNYPMQHERKVMQRHPTLR.

Residues 24–43 (KRTQNNTEQASRAINSPLQS) form a disordered region. Residues 26 to 43 (TQNNTEQASRAINSPLQS) are compositionally biased toward polar residues.

This is an uncharacterized protein from Homo sapiens (Human).